We begin with the raw amino-acid sequence, 323 residues long: tRNA dimethylallyltransferase (323 aa).

Residue G12–T19 coordinates ATP. A substrate-binding site is contributed by T14–T19. Interaction with substrate tRNA stretches follow at residues D37 to L40 and Q161 to R165.

The protein belongs to the IPP transferase family. As to quaternary structure, monomer. Mg(2+) is required as a cofactor.

The catalysed reaction is adenosine(37) in tRNA + dimethylallyl diphosphate = N(6)-dimethylallyladenosine(37) in tRNA + diphosphate. Functionally, catalyzes the transfer of a dimethylallyl group onto the adenine at position 37 in tRNAs that read codons beginning with uridine, leading to the formation of N6-(dimethylallyl)adenosine (i(6)A). The protein is tRNA dimethylallyltransferase of Pseudomonas fluorescens (strain SBW25).